Consider the following 455-residue polypeptide: UDP-N-acetylmuramoylalanine--D-glutamate ligase (455 aa).

An ATP-binding site is contributed by 119–125; the sequence is GTNGKTT.

Belongs to the MurCDEF family.

It localises to the cytoplasm. The enzyme catalyses UDP-N-acetyl-alpha-D-muramoyl-L-alanine + D-glutamate + ATP = UDP-N-acetyl-alpha-D-muramoyl-L-alanyl-D-glutamate + ADP + phosphate + H(+). It functions in the pathway cell wall biogenesis; peptidoglycan biosynthesis. In terms of biological role, cell wall formation. Catalyzes the addition of glutamate to the nucleotide precursor UDP-N-acetylmuramoyl-L-alanine (UMA). In Listeria monocytogenes serotype 4b (strain F2365), this protein is UDP-N-acetylmuramoylalanine--D-glutamate ligase.